The sequence spans 215 residues: Cytochrome b-c1 complex subunit Rieske, mitochondrial (215 aa).

The transit peptide at 1–22 (MLGIRSSVKTCFKPMSLTSKRL) directs the protein to the mitochondrion. Positions 23-30 (ISQSLLAS) are cleaved as a propeptide — removed in mature form. The Mitochondrial matrix segment spans residues 31–50 (KSTYRTPNFDDVLKENNDAD). Residues 51 to 80 (KGRSYAYFMVGAMGLLSSAGAKSTVETFIS) traverse the membrane as a helical segment. Topologically, residues 81–215 (SMTATADVLA…EFDGDKVIVG (135 aa)) are mitochondrial intermembrane. The interval 90–93 (AMAK) is hinge. A Rieske domain is found at 123 to 214 (PHEIQEANSV…YEFDGDKVIV (92 aa)). Cys159, His161, Cys178, and His181 together coordinate [2Fe-2S] cluster. A disulfide bond links Cys164 and Cys180.

Belongs to the Rieske iron-sulfur protein family. As to quaternary structure, component of the ubiquinol-cytochrome c oxidoreductase (cytochrome b-c1 complex, complex III, CIII), a multisubunit enzyme composed of 10 subunits. The complex is composed of 3 respiratory subunits cytochrome b (COB), cytochrome c1 (CYT1) and Rieske protein (RIP1), 2 core protein subunits COR1 and QCR2, and 5 low-molecular weight protein subunits QCR6, QCR7, QCR8, QCR9 and QCR10. The complex exists as an obligatory dimer and forms supercomplexes (SCs) in the inner mitochondrial membrane with a monomer or a dimer of cytochrome c oxidase (complex IV, CIV), resulting in 2 different assemblies (supercomplexes III(2)IV and III(2)IV(2)). RIP1 interacts with QCR10 on the intermembrane space (IMS) side, and with QCR9. The cofactor is [2Fe-2S] cluster. Post-translationally, processed by both the mitochondrial processing peptidase (MPP) and the mitochondrial intermediate protease (MIP). Initially, MPP removes 22 amino acids from the newly imported precursor in the mitochondrial matrix. This proteolytic processing is then followed by a second proteolytic cleavage by MIP, which removes an octapeptide to generate mature-sized RIP1.

Its subcellular location is the mitochondrion inner membrane. It catalyses the reaction a quinol + 2 Fe(III)-[cytochrome c](out) = a quinone + 2 Fe(II)-[cytochrome c](out) + 2 H(+)(out). Its function is as follows. Component of the ubiquinol-cytochrome c oxidoreductase, a multisubunit transmembrane complex that is part of the mitochondrial electron transport chain which drives oxidative phosphorylation. The respiratory chain contains 3 multisubunit complexes succinate dehydrogenase (complex II, CII), ubiquinol-cytochrome c oxidoreductase (cytochrome b-c1 complex, complex III, CIII) and cytochrome c oxidase (complex IV, CIV), that cooperate to transfer electrons derived from NADH and succinate to molecular oxygen, creating an electrochemical gradient over the inner membrane that drives transmembrane transport and the ATP synthase. The cytochrome b-c1 complex catalyzes electron transfer from ubiquinol to cytochrome c, linking this redox reaction to translocation of protons across the mitochondrial inner membrane, with protons being carried across the membrane as hydrogens on the quinol. In the process called Q cycle, 2 protons are consumed from the matrix, 4 protons are released into the intermembrane space and 2 electrons are passed to cytochrome c. The Rieske protein is a catalytic core subunit containing a [2Fe-2S] iron-sulfur cluster. It cycles between 2 conformational states during catalysis to transfer electrons from the quinol bound in the Q(0) site in cytochrome b (COB) to cytochrome c1 (CYT1). The sequence is that of Cytochrome b-c1 complex subunit Rieske, mitochondrial (RIP1) from Saccharomyces cerevisiae (strain ATCC 204508 / S288c) (Baker's yeast).